A 220-amino-acid chain; its full sequence is Claudin-22 (220 aa).

Topologically, residues 1-10 (MALVFRTVAQ) are cytoplasmic. Residues 11 to 30 (LAGVSLSLLGWVLSCLTNYL) traverse the membrane as a helical segment. At 31-81 (PHWKNLNLDLNEMENWTMGLWQTCVIQEEVGMQCKDFDSFLALPAELRVSR) the chain is on the extracellular side. Residues 82-102 (ILMFLSNGLGFLGLLVSGFGL) form a helical membrane-spanning segment. Residues 103 to 117 (DCLRIGESQRDLKRR) are Cytoplasmic-facing. The helical transmembrane segment at 118–138 (LLILGGILSWASGVTALVPVS) threads the bilayer. The Extracellular portion of the chain corresponds to 139–164 (WVAHKTVQEFWDENVPDFVPRWEFGE). The helical transmembrane segment at 165–185 (ALFLGWFAGLSLLLGGCLLHC) threads the bilayer. Residues 186-220 (AACSSHAPLASGHYAVAQTQDHHQELETRNTNLKH) are Cytoplasmic-facing.

This sequence belongs to the claudin family.

The protein resides in the cell junction. It localises to the tight junction. Its subcellular location is the cell membrane. Its function is as follows. Plays a major role in tight junction-specific obliteration of the intercellular space, through calcium-independent cell-adhesion activity. The chain is Claudin-22 (CLDN22) from Homo sapiens (Human).